The following is a 162-amino-acid chain: Peptidyl-prolyl cis-trans isomerase (162 aa).

The PPIase cyclophilin-type domain occupies 5–161; sequence FFDVQFGGDA…TTIKIVDSGV (157 aa).

The protein belongs to the cyclophilin-type PPIase family. PPIase A subfamily.

It carries out the reaction [protein]-peptidylproline (omega=180) = [protein]-peptidylproline (omega=0). With respect to regulation, binds cyclosporin A (CsA). CsA mediates some of its effects via an inhibitory action on PPIase. In terms of biological role, PPIases accelerate the folding of proteins. It catalyzes the cis-trans isomerization of proline imidic peptide bonds in oligopeptides. The polypeptide is Peptidyl-prolyl cis-trans isomerase (Paramecium primaurelia).